Reading from the N-terminus, the 143-residue chain is Transcriptional regulator MraZ (143 aa).

SpoVT-AbrB domains lie at 5 to 47 and 76 to 119; these read EFRH…PMKE and ATEC…DEAR.

Belongs to the MraZ family. As to quaternary structure, forms oligomers.

Its subcellular location is the cytoplasm. It is found in the nucleoid. This Enterococcus hirae protein is Transcriptional regulator MraZ.